The following is a 404-amino-acid chain: Clavilactone A biosynthesis cluster protein Y (404 aa).

Its function is as follows. Part of the gene cluster that mediates the biosynthesis of clavilactone A, a meroterpenoid that features a unique benzo-fused ten-membered carbocyclic ring unit with an alpha,beta-epoxy-gamma-lactone moiety, forming an intriguing 10/5/3 tricyclic nested skeleton. ClaR, ClaS and ClaT are sufficient to produce clavilactone A and the function of claY, if any, has still to be identified. The biosynthesis begins with the prenyltransferase claS that transfers geranyl pyrophosphate (GPP) to hydroquinone to produces geranylhydroquinon. The cytochrome P450 monooxygenase claR then catalyzes the diradical coupling reaction between the intramolecular hydroquinone and allyl moieties to form the benzo-fused ten-membered carbocyclic ring unit of wigantol. Finally the cytochrome P450 monooxygenase claT exquisitely and stereoselectively assembles the alpha,beta-epoxy-gamma-lactone moiety, producing clavilactone A via arnebinol A. This chain is Clavilactone A biosynthesis cluster protein Y, found in Ampulloclitocybe clavipes (Club foot).